The primary structure comprises 87 residues: LYR motif-containing protein 2 (87 aa).

The N-terminal 19 residues, 1–19 (MGSRLPPAALTLKQFLVRQ), are a transit peptide targeting the mitochondrion.

This sequence belongs to the complex I LYR family.

Its subcellular location is the mitochondrion. Functionally, involved in efficient integration of the N-module into mitochondrial respiratory chain complex I. The protein is LYR motif-containing protein 2 (lyrm2) of Xenopus tropicalis (Western clawed frog).